A 75-amino-acid polypeptide reads, in one-letter code: Small ribosomal subunit protein bS18 (75 aa).

Belongs to the bacterial ribosomal protein bS18 family. In terms of assembly, part of the 30S ribosomal subunit. Forms a tight heterodimer with protein bS6.

Functionally, binds as a heterodimer with protein bS6 to the central domain of the 16S rRNA, where it helps stabilize the platform of the 30S subunit. In Mycoplasma mycoides subsp. mycoides SC (strain CCUG 32753 / NCTC 10114 / PG1), this protein is Small ribosomal subunit protein bS18.